Consider the following 112-residue polypeptide: Toxin-like structure LSTX-D10 (112 aa).

The signal sequence occupies residues 1 to 20 (MMKVLVVVALLVTLISYSSS). Residues 21-41 (EGIDDLEADELLSLMANEQTR) constitute a propeptide that is removed on maturation. 4 cysteine pairs are disulfide-bonded: cysteine 45/cysteine 60, cysteine 52/cysteine 69, cysteine 59/cysteine 84, and cysteine 71/cysteine 82.

Belongs to the neurotoxin 19 (CSTX) family. 01 subfamily. Expressed by the venom gland.

Its subcellular location is the secreted. The sequence is that of Toxin-like structure LSTX-D10 from Lycosa singoriensis (Wolf spider).